Reading from the N-terminus, the 374-residue chain is Glutamate 5-kinase (374 aa).

K9 contacts ATP. Positions 49, 136, and 148 each coordinate substrate. ATP-binding positions include 168-169 and 210-216; these read TD and TGGMKSK. Residues 276 to 354 form the PUA domain; sequence SGVVRIDQGA…DEAKQLIPLV (79 aa).

Belongs to the glutamate 5-kinase family.

The protein localises to the cytoplasm. It catalyses the reaction L-glutamate + ATP = L-glutamyl 5-phosphate + ADP. The protein operates within amino-acid biosynthesis; L-proline biosynthesis; L-glutamate 5-semialdehyde from L-glutamate: step 1/2. Functionally, catalyzes the transfer of a phosphate group to glutamate to form L-glutamate 5-phosphate. This Halalkalibacterium halodurans (strain ATCC BAA-125 / DSM 18197 / FERM 7344 / JCM 9153 / C-125) (Bacillus halodurans) protein is Glutamate 5-kinase.